Consider the following 407-residue polypeptide: Imidazolonepropionase (407 aa).

His-68 and His-70 together coordinate Fe(3+). Residues His-68 and His-70 each coordinate Zn(2+). Arg-77, Tyr-140, and His-173 together coordinate 4-imidazolone-5-propanoate. Residue Tyr-140 participates in N-formimidoyl-L-glutamate binding. His-238 is a Fe(3+) binding site. Position 238 (His-238) interacts with Zn(2+). Position 241 (Gln-241) interacts with 4-imidazolone-5-propanoate. Asp-313 provides a ligand contact to Fe(3+). Asp-313 serves as a coordination point for Zn(2+). N-formimidoyl-L-glutamate is bound by residues Asn-315 and Gly-317. Position 318 (Thr-318) interacts with 4-imidazolone-5-propanoate.

It belongs to the metallo-dependent hydrolases superfamily. HutI family. The cofactor is Zn(2+). It depends on Fe(3+) as a cofactor.

The protein resides in the cytoplasm. The enzyme catalyses 4-imidazolone-5-propanoate + H2O = N-formimidoyl-L-glutamate. It functions in the pathway amino-acid degradation; L-histidine degradation into L-glutamate; N-formimidoyl-L-glutamate from L-histidine: step 3/3. Catalyzes the hydrolytic cleavage of the carbon-nitrogen bond in imidazolone-5-propanoate to yield N-formimidoyl-L-glutamate. It is the third step in the universal histidine degradation pathway. This is Imidazolonepropionase from Burkholderia orbicola (strain MC0-3).